Reading from the N-terminus, the 521-residue chain is Hyccin (521 aa).

A Phosphothreonine modification is found at Thr306. Residue Ser321 is modified to Phosphoserine. The span at 355–373 (AASSTSQSGLSNSSHNCSN) shows a compositional bias: low complexity. Positions 355 to 413 (AASSTSQSGLSNSSHNCSNKTSVGKNQRRSGGSKAGAKERETAGESCRDHFARKQTQRA) are disordered. Positions 390–406 (GAKERETAGESCRDHFA) are enriched in basic and acidic residues. 5 positions are modified to phosphoserine: Ser415, Ser422, Ser433, Ser453, and Ser465.

The protein belongs to the Hyccin family. In terms of assembly, component of a phosphatidylinositol 4-kinase (PI4K) complex, composed of PI4KA, EFR3 (EFR3A or EFR3B), TTC7 (TTC7A or TTC7B) and HYCC (HYCC1 or HYCC2). Interacts with TTC7 (TTC7A or TTC7B), interaction is direct. Predominantly expressed in the central nervous system, where it is found in neurons but not in myelinating cells. Lower abundance is observed in peripheral neurons, where it is detectable only at early postnatal ages. Expressed in both oligodendrocytes and neurons.

It localises to the cytoplasm. Its subcellular location is the cytosol. The protein resides in the cell membrane. Functionally, component of a complex required to localize phosphatidylinositol 4-kinase (PI4K) to the plasma membrane. The complex acts as a regulator of phosphatidylinositol 4-phosphate (PtdIns(4)P) synthesis. HYCC1 plays a key role in oligodendrocytes formation, a cell type with expanded plasma membrane that requires generation of PtdIns(4)P. Its role in oligodendrocytes formation probably explains its importance in myelination of the central and peripheral nervous system. May also have a role in the beta-catenin/Lef signaling pathway. The polypeptide is Hyccin (Hycc1) (Mus musculus (Mouse)).